Here is a 500-residue protein sequence, read N- to C-terminus: V-type proton ATPase subunit B (500 aa).

This sequence belongs to the ATPase alpha/beta chains family. In terms of assembly, V-ATPase is a heteromultimeric enzyme composed of a peripheral catalytic V1 complex (main components: subunits A, B, C, D, E, and F) attached to an integral membrane V0 proton pore complex (main component: the proteolipid protein).

Its function is as follows. Non-catalytic subunit of the peripheral V1 complex of vacuolar ATPase. V-ATPase is responsible for acidifying a variety of intracellular compartments in eukaryotic cells. The sequence is that of V-type proton ATPase subunit B from Cyanidium caldarium (Red alga).